The chain runs to 789 residues: Fibrinogen alpha chain (789 aa).

Residues 1 to 19 (MLSLRVTCLILSVASTVWT) form the signal peptide. Phosphoserine is present on Ser-46. Residues 69–554 (CRMKGLIDEA…GRARARPTRD (486 aa)) adopt a coiled-coil conformation. Composition is skewed to basic and acidic residues over residues 263-287 (ERPG…RGDF) and 384-396 (KGDK…KEKV). The disordered stretch occupies residues 263 to 420 (ERPGKDGGSR…TITKTVTGPD (158 aa)). The segment covering 397 to 416 (TSSGTSTTHRSCSKTITKTV) has biased composition (polar residues). Cys-408 and Cys-438 form a disulfide bridge. The residue at position 447 (Ser-447) is a Phosphoserine. Pro-504 is modified (4-hydroxyproline; by P4HA1). A compositionally biased stretch (basic and acidic residues) spans 526–541 (ADEAGSEAHREGETRN). Residues 526 to 555 (ADEAGSEAHREGETRNTKRGRARARPTRDC) are disordered. The Fibrinogen C-terminal domain maps to 546–787 (RARARPTRDC…AVRMKIRPLV (242 aa)). Asn-609 is a glycosylation site (N-linked (GlcNAc...) asparagine). Residues Asp-714, Asp-716, Trp-718, and Glu-720 each contribute to the Ca(2+) site. The cysteines at positions 722 and 735 are disulfide-linked.

As to quaternary structure, heterohexamer; disulfide linked. Contains 2 sets of 3 non-identical chains (alpha, beta and gamma). The 2 heterotrimers are in head to head conformation with the N-termini in a small central domain. In terms of processing, conversion of fibrinogen to fibrin is triggered by thrombin, which cleaves fibrinopeptides A and B from alpha and beta chains, and thus exposes the N-terminal polymerization sites responsible for the formation of the soft clot. The soft clot is converted into the hard clot by factor XIIIA which catalyzes the epsilon-(gamma-glutamyl)lysine cross-linking between gamma chains (stronger) and between alpha chains (weaker) of different monomers. Forms F13A-mediated cross-links between a glutamine and the epsilon-amino group of a lysine residue, forming fibronectin-fibrinogen heteropolymers. Post-translationally, phosphorylated by FAM20C in the extracellular medium. Expressed in liver.

It localises to the secreted. Cleaved by the protease thrombin to yield monomers which, together with fibrinogen beta (FGB) and fibrinogen gamma (FGG), polymerize to form an insoluble fibrin matrix. Fibrin has a major function in hemostasis as one of the primary components of blood clots. In addition, functions during the early stages of wound repair to stabilize the lesion and guide cell migration during re-epithelialization. Was originally thought to be essential for platelet aggregation, based on in vitro studies using anticoagulated blood. However, subsequent studies have shown that it is not absolutely required for thrombus formation in vivo. Enhances expression of SELP in activated platelets via an ITGB3-dependent pathway. Maternal fibrinogen is essential for successful pregnancy. Fibrin deposition is also associated with infection, where it protects against IFNG-mediated hemorrhage. May also facilitate the immune response via both innate and T-cell mediated pathways. The chain is Fibrinogen alpha chain from Mus musculus (Mouse).